The following is a 201-amino-acid chain: MIKLIVGLGNPGAEYTATRHNAGFWLVDQLAREAGATLRDERRFHGFYAKARLFGEEVHLLEPQTYMNRSGQAVVALAHFFKILPTEILVAHDELDLPPGAAKLKLGGGSGGHNGLKDISAHLSSQQYWRLRIGIGHPRDLIPESARAGAKPDVANFVLKPPRKDEQDLINAAIERALAVMPTAIKGETERAMMQLHRNGA.

Tyr15 contacts tRNA. The active-site Proton acceptor is His20. Residues Tyr66, Asn68, and Asn114 each coordinate tRNA.

Belongs to the PTH family. As to quaternary structure, monomer.

Its subcellular location is the cytoplasm. The catalysed reaction is an N-acyl-L-alpha-aminoacyl-tRNA + H2O = an N-acyl-L-amino acid + a tRNA + H(+). Its function is as follows. Hydrolyzes ribosome-free peptidyl-tRNAs (with 1 or more amino acids incorporated), which drop off the ribosome during protein synthesis, or as a result of ribosome stalling. Catalyzes the release of premature peptidyl moieties from peptidyl-tRNA molecules trapped in stalled 50S ribosomal subunits, and thus maintains levels of free tRNAs and 50S ribosomes. The protein is Peptidyl-tRNA hydrolase of Burkholderia pseudomallei (strain K96243).